Reading from the N-terminus, the 5054-residue chain is Malformin synthetase mlfA (5054 aa).

An adenylation 1 region spans residues 194 to 585 (ERRAANRPHS…CGRADTQVKL (392 aa)). Positions 723 to 799 (LGLSQLEQEI…EASSLAEVQE (77 aa)) constitute a Carrier 1 domain. S760 carries the post-translational modification O-(pantetheine 4'-phosphoryl)serine. Residues 837–1268 (EDVFPCTTMQ…ALNTLTLLQA (432 aa)) are condensation 1. Positions 1296–1685 (DRWVTRQPES…GRKDTQVKLR (390 aa)) are adenylation 2. The 78-residue stretch at 1823 to 1900 (TASSKLELTL…QLAAILGEAT (78 aa)) folds into the Carrier 2 domain. At S1860 the chain carries O-(pantetheine 4'-phosphoryl)serine. Disordered stretches follow at residues 1899-1929 (ATGQPESSASSTTEEGFTFSTPDDSSTNDGV) and 1964-1994 (GSSSCKTPSVSSSSSSSSSRKKKSAKVVSPV). Low complexity-rich tracts occupy residues 1904–1927 (ESSASSTTEEGFTFSTPDDSSTND) and 1965–1981 (SSSCKTPSVSSSSSSSS). A condensation 2 region spans residues 2033-2448 (EDIYPATALQ…GVSYRDKQTL (416 aa)). Positions 2471–2863 (VRTPHAPAVF…IGRRDGQLKL (393 aa)) are adenylation 3. The Carrier 3 domain occupies 2999–3075 (RPATAQEREM…QLMRHLSANG (77 aa)). An O-(pantetheine 4'-phosphoryl)serine modification is found at S3036. 2 condensation regions span residues 3092 to 3557 (WVPL…TYDQ) and 3578 to 3997 (DIYP…EQLV). Residues 4022–4412 (HSSREAACAW…VGRKDNQIKF (391 aa)) are adenylation 4. Residues 4546-4622 (MPFTAAECKM…DLAYRTANLV (77 aa)) enclose the Carrier 4 domain. S4583 is subject to O-(pantetheine 4'-phosphoryl)serine. The interval 4659–4972 (EVLPTTSFQR…LQTIVQHQNN (314 aa)) is condensation 5.

This sequence belongs to the NRP synthetase family.

It participates in secondary metabolite biosynthesis. Functionally, nonribosomal peptide synthetase; part of the gene cluster that mediates the biosynthesis of malformins, cyclic pentapeptides with a disulfide bond between 2 consecutive cysteins, that show potential anti-tumor as well as antimalarial and antitrypanosomal properties. The nonribosomal peptide synthetase mlfA is responsible of the formation of the cyclic pentapeptide. The malformin biosynthesis clusters in malformin-producing fungi also contain enzymes involved in the formation of the disulfide bond between the two consecutive cysteins within malformins, in addition to additional tailoring enzymes such as methyltransferases or oxidoreductases. They are also composed of up to 4 major facilitator superfamily transporters, and transcription factors probably involved in the regulation of the expression of those clusters. In Aspergillus niger (strain ATCC MYA-4892 / CBS 513.88 / FGSC A1513), this protein is Malformin synthetase mlfA.